A 1473-amino-acid chain; its full sequence is Ovostatin (1473 aa).

Residues 1 to 36 form the signal peptide; that stretch reads MHCFLGREILSFFCLTVRKMWLKFILAILLLHAAAG. N-linked (GlcNAc...) asparagine glycans are attached at residues Asn-67, Asn-82, Asn-89, Asn-191, Asn-342, Asn-403, Asn-527, Asn-588, Asn-757, Asn-1141, Asn-1221, Asn-1315, and Asn-1347.

The protein belongs to the protease inhibitor I39 (alpha-2-macroglobulin) family. As to quaternary structure, homotetramer, which consists of two pairs of disulfide-linked chains. In terms of processing, lacks the thioester bond found in other members of this family. Glycosylated; contains 56 glucosamine units per subunit.

It is found in the secreted. Is able to inhibit all four classes of proteinases by a unique 'trapping' mechanism. This protein has a peptide stretch, called the 'bait region' which contains specific cleavage sites for different proteinases. When a proteinase cleaves the bait region, a conformational change is induced in the protein which traps the proteinase. The entrapped enzyme remains active against low molecular weight substrates (activity against high molecular weight substrates is greatly reduced). The polypeptide is Ovostatin (Gallus gallus (Chicken)).